The following is a 443-amino-acid chain: UPF0597 protein Dvul_2496 (443 aa).

The tract at residues 156-178 is disordered; sequence GMERAPEADGTLHGGASCEPSAS.

It belongs to the UPF0597 family.

The chain is UPF0597 protein Dvul_2496 from Nitratidesulfovibrio vulgaris (strain DP4) (Desulfovibrio vulgaris).